Here is a 317-residue protein sequence, read N- to C-terminus: 4-hydroxy-3-methylbut-2-enyl diphosphate reductase (317 aa).

A [4Fe-4S] cluster-binding site is contributed by C12. Residues H41 and H74 each contribute to the (2E)-4-hydroxy-3-methylbut-2-enyl diphosphate site. Dimethylallyl diphosphate is bound by residues H41 and H74. Isopentenyl diphosphate-binding residues include H41 and H74. Residue C96 participates in [4Fe-4S] cluster binding. A (2E)-4-hydroxy-3-methylbut-2-enyl diphosphate-binding site is contributed by H124. A dimethylallyl diphosphate-binding site is contributed by H124. Residue H124 coordinates isopentenyl diphosphate. E126 acts as the Proton donor in catalysis. A (2E)-4-hydroxy-3-methylbut-2-enyl diphosphate-binding site is contributed by T168. C198 contributes to the [4Fe-4S] cluster binding site. The (2E)-4-hydroxy-3-methylbut-2-enyl diphosphate site is built by S226, S227, N228, and S270. Residues S226, S227, N228, and S270 each contribute to the dimethylallyl diphosphate site. Residues S226, S227, N228, and S270 each contribute to the isopentenyl diphosphate site.

The protein belongs to the IspH family. [4Fe-4S] cluster serves as cofactor.

The enzyme catalyses isopentenyl diphosphate + 2 oxidized [2Fe-2S]-[ferredoxin] + H2O = (2E)-4-hydroxy-3-methylbut-2-enyl diphosphate + 2 reduced [2Fe-2S]-[ferredoxin] + 2 H(+). It carries out the reaction dimethylallyl diphosphate + 2 oxidized [2Fe-2S]-[ferredoxin] + H2O = (2E)-4-hydroxy-3-methylbut-2-enyl diphosphate + 2 reduced [2Fe-2S]-[ferredoxin] + 2 H(+). The protein operates within isoprenoid biosynthesis; dimethylallyl diphosphate biosynthesis; dimethylallyl diphosphate from (2E)-4-hydroxy-3-methylbutenyl diphosphate: step 1/1. It participates in isoprenoid biosynthesis; isopentenyl diphosphate biosynthesis via DXP pathway; isopentenyl diphosphate from 1-deoxy-D-xylulose 5-phosphate: step 6/6. In terms of biological role, catalyzes the conversion of 1-hydroxy-2-methyl-2-(E)-butenyl 4-diphosphate (HMBPP) into a mixture of isopentenyl diphosphate (IPP) and dimethylallyl diphosphate (DMAPP). Acts in the terminal step of the DOXP/MEP pathway for isoprenoid precursor biosynthesis. The chain is 4-hydroxy-3-methylbut-2-enyl diphosphate reductase from Hahella chejuensis (strain KCTC 2396).